Reading from the N-terminus, the 66-residue chain is AKVANSTDSSSLAEVIDRILDKGIVIDAWVKVSLVGIELLAIEARVVVASVETYLKYAEAIGLTIP.

It belongs to the gas vesicle GvpA family. The gas vesicle shell is 2 nm thick and consists of a single layer of this protein. It forms helical ribs nearly perpendicular to the long axis of the vesicle.

The protein localises to the gas vesicle shell. Its function is as follows. Gas vesicles are hollow, gas filled proteinaceous nanostructures found in some microorganisms. During planktonic growth they allow positioning of the organism at a favorable depth for light or nutrient acquisition. GvpA forms the protein shell. The protein is Gas vesicle protein A of Thiocapsa pendens (Amoebobacter pendens).